The primary structure comprises 457 residues: GTPase Der (457 aa).

EngA-type G domains lie at 4–169 (PTIA…PENN) and 177–352 (IMMS…NQHR). GTP-binding positions include 10-17 (GRPNVGKS), 57-61 (DTGGL), 120-123 (NKCE), 183-190 (GRPNVGKS), 230-234 (DTAGI), and 295-298 (NKWD). The region spanning 353 to 438 (RRVTTSVVNE…PLILLWRGKQ (86 aa)) is the KH-like domain.

Belongs to the TRAFAC class TrmE-Era-EngA-EngB-Septin-like GTPase superfamily. EngA (Der) GTPase family. In terms of assembly, associates with the 50S ribosomal subunit.

Functionally, GTPase that plays an essential role in the late steps of ribosome biogenesis. The chain is GTPase Der from Prochlorococcus marinus (strain AS9601).